Reading from the N-terminus, the 477-residue chain is Dihydrolipoyl dehydrogenase (477 aa).

Residues 41-50, Lys-59, Gly-124, and 153-155 each bind FAD; these read EKRGALGGTC and TGS. Residues Cys-50 and Cys-55 are joined by a disulfide bond. Residues 190–197, Glu-213, Val-248, and Gly-282 each bind NAD(+); that span reads GGGVIGLE. Residues Asp-323 and 330–333 contribute to the FAD site; that span reads MLAH. His-456 acts as the Proton acceptor in catalysis.

Belongs to the class-I pyridine nucleotide-disulfide oxidoreductase family. Homodimer. FAD is required as a cofactor.

The catalysed reaction is N(6)-[(R)-dihydrolipoyl]-L-lysyl-[protein] + NAD(+) = N(6)-[(R)-lipoyl]-L-lysyl-[protein] + NADH + H(+). This is Dihydrolipoyl dehydrogenase (LPD) from Trypanosoma cruzi.